A 243-amino-acid chain; its full sequence is Large ribosomal subunit protein uL3 (243 aa).

Disordered regions lie at residues 139 to 164 (VSHRSIGSTGGRQDPGKTFKNKKMPG) and 218 to 243 (KPGKFKLADGGDKAAAAPEATAGEGA). Glutamine 151 is modified (N5-methylglutamine). The span at 218–229 (KPGKFKLADGGD) shows a compositional bias: basic and acidic residues. A compositionally biased stretch (low complexity) spans 230-243 (KAAAAPEATAGEGA).

This sequence belongs to the universal ribosomal protein uL3 family. In terms of assembly, part of the 50S ribosomal subunit. Forms a cluster with proteins L14 and L19. In terms of processing, methylated by PrmB.

Its function is as follows. One of the primary rRNA binding proteins, it binds directly near the 3'-end of the 23S rRNA, where it nucleates assembly of the 50S subunit. The chain is Large ribosomal subunit protein uL3 from Afipia carboxidovorans (strain ATCC 49405 / DSM 1227 / KCTC 32145 / OM5) (Oligotropha carboxidovorans).